Consider the following 237-residue polypeptide: CDP-diacylglycerol--serine O-phosphatidyltransferase (237 aa).

The next 8 helical transmembrane spans lie at 3 to 23, 25 to 45, 73 to 93, 95 to 115, 124 to 144, 150 to 170, 184 to 204, and 207 to 227; these read INPL…LGMM, IFYA…ASLI, VVAF…YNFG, IGMA…ARFN, YSFI…CVLL, FLEG…GVLM, WNLK…VRPL, and LSVF…FLMV.

This sequence belongs to the CDP-alcohol phosphatidyltransferase class-I family.

It is found in the cell membrane. The enzyme catalyses a CDP-1,2-diacyl-sn-glycerol + L-serine = a 1,2-diacyl-sn-glycero-3-phospho-L-serine + CMP + H(+). This Helicobacter pylori (strain J99 / ATCC 700824) (Campylobacter pylori J99) protein is CDP-diacylglycerol--serine O-phosphatidyltransferase (pssA).